The sequence spans 242 residues: N-acetylmuramate alpha-1-phosphate uridylyltransferase (242 aa).

Residues 16 to 18 (GTR) and lysine 28 contribute to the UTP site. Asparagine 113 contributes to the substrate binding site. Position 115 (aspartate 115) interacts with Mg(2+). A substrate-binding site is contributed by aspartate 158.

This sequence belongs to the nucleotidyltransferase MurU family. As to quaternary structure, monomer. Mg(2+) serves as cofactor.

The enzyme catalyses N-acetyl-alpha-D-muramate 1-phosphate + UDP + H(+) = UDP-N-acetyl-alpha-D-muramate + phosphate. Its pathway is cell wall biogenesis; peptidoglycan recycling. Its function is as follows. Catalyzes the formation of UDP-N-acetylmuramate (UDP-MurNAc), a crucial precursor of the bacterial peptidoglycan cell wall, from UTP and MurNAc-alpha-1P. Is likely involved in peptidoglycan recycling as part of a cell wall recycling pathway that bypasses de novo biosynthesis of the peptidoglycan precursor UDP-MurNAc. Is able to complement the fosfomycin sensitivity phenotype of a P.putida mutant lacking murU. This is N-acetylmuramate alpha-1-phosphate uridylyltransferase from Caulobacter vibrioides (strain ATCC 19089 / CIP 103742 / CB 15) (Caulobacter crescentus).